We begin with the raw amino-acid sequence, 568 residues long: DNA mismatch repair protein MutL (568 aa).

Belongs to the DNA mismatch repair MutL/HexB family.

Functionally, this protein is involved in the repair of mismatches in DNA. It is required for dam-dependent methyl-directed DNA mismatch repair. May act as a 'molecular matchmaker', a protein that promotes the formation of a stable complex between two or more DNA-binding proteins in an ATP-dependent manner without itself being part of a final effector complex. The protein is DNA mismatch repair protein MutL of Nostoc punctiforme (strain ATCC 29133 / PCC 73102).